The following is a 366-amino-acid chain: Cyclin-O protein A (366 aa).

2 disordered regions span residues 18–55 and 80–99; these read AAFS…GIKK and YETP…PYDS.

It belongs to the cyclin family.

It localises to the cytoplasm. Functionally, specifically required for generation of multiciliated cells, possibly by promoting a cell cycle state compatible with centriole amplification and maturation. Acts downstream of mcidas to promote mother centriole amplification and maturation in preparation for apical docking. This Xenopus laevis (African clawed frog) protein is Cyclin-O protein A (ccno-a).